A 553-amino-acid chain; its full sequence is CTP synthase (553 aa).

Positions 1–270 are amidoligase domain; that stretch reads MTKYVFVTGG…DRLICEELRL (270 aa). A CTP-binding site is contributed by serine 13. Serine 13 provides a ligand contact to UTP. Residues 14-19 and aspartate 71 each bind ATP; that span reads SLGKGI. Residues aspartate 71 and glutamate 144 each coordinate Mg(2+). CTP contacts are provided by residues 151 to 153, 191 to 196, and lysine 227; these read DIE and KTKPTQ. UTP is bound by residues 191 to 196 and lysine 227; that span reads KTKPTQ. The Glutamine amidotransferase type-1 domain maps to 295–547; it reads TIGMVGKYVD…VQAALACQQT (253 aa). Glycine 356 contacts L-glutamine. Cysteine 383 (nucleophile; for glutamine hydrolysis) is an active-site residue. Residues 384 to 387, glutamate 407, and arginine 473 contribute to the L-glutamine site; that span reads LGMQ. Active-site residues include histidine 520 and glutamate 522.

Belongs to the CTP synthase family. As to quaternary structure, homotetramer.

It carries out the reaction UTP + L-glutamine + ATP + H2O = CTP + L-glutamate + ADP + phosphate + 2 H(+). The catalysed reaction is L-glutamine + H2O = L-glutamate + NH4(+). The enzyme catalyses UTP + NH4(+) + ATP = CTP + ADP + phosphate + 2 H(+). It participates in pyrimidine metabolism; CTP biosynthesis via de novo pathway; CTP from UDP: step 2/2. With respect to regulation, allosterically activated by GTP, when glutamine is the substrate; GTP has no effect on the reaction when ammonia is the substrate. The allosteric effector GTP functions by stabilizing the protein conformation that binds the tetrahedral intermediate(s) formed during glutamine hydrolysis. Inhibited by the product CTP, via allosteric rather than competitive inhibition. Functionally, catalyzes the ATP-dependent amination of UTP to CTP with either L-glutamine or ammonia as the source of nitrogen. Regulates intracellular CTP levels through interactions with the four ribonucleotide triphosphates. This Burkholderia mallei (strain NCTC 10229) protein is CTP synthase.